The sequence spans 120 residues: Putative pterin-4-alpha-carbinolamine dehydratase (120 aa).

Belongs to the pterin-4-alpha-carbinolamine dehydratase family.

The enzyme catalyses (4aS,6R)-4a-hydroxy-L-erythro-5,6,7,8-tetrahydrobiopterin = (6R)-L-erythro-6,7-dihydrobiopterin + H2O. The protein is Putative pterin-4-alpha-carbinolamine dehydratase of Bdellovibrio bacteriovorus (strain ATCC 15356 / DSM 50701 / NCIMB 9529 / HD100).